The chain runs to 214 residues: Charged multivesicular body protein 2b-B (214 aa).

Residues 25–55 (QRAITRDRAALEKQEKQLEMEIKKMAKTGNK) adopt a coiled-coil conformation. Positions 178–200 (MAKAPSAAKGLPSTSAAKSKGIS) are disordered. An MIT-interacting motif motif is present at residues 202–212 (EEIERQLKALG).

This sequence belongs to the SNF7 family. In terms of assembly, probable core component of the endosomal sorting required for transport complex III (ESCRT-III). ESCRT-III components are thought to multimerize to form a flat lattice on the perimeter membrane of the endosome.

It localises to the cytoplasm. It is found in the cytosol. Its subcellular location is the late endosome membrane. Its function is as follows. Probable core component of the endosomal sorting required for transport complex III (ESCRT-III) which is involved in multivesicular bodies (MVBs) formation and sorting of endosomal cargo proteins into MVBs. MVBs contain intraluminal vesicles (ILVs) that are generated by invagination and scission from the limiting membrane of the endosome and mostly are delivered to lysosomes enabling degradation of membrane proteins, such as stimulated growth factor receptors, lysosomal enzymes and lipids. The polypeptide is Charged multivesicular body protein 2b-B (chmp2b-b) (Xenopus laevis (African clawed frog)).